Reading from the N-terminus, the 451-residue chain is Tubulin alpha-2 chain (451 aa).

A GTP-binding site is contributed by glutamine 11. Lysine 40 bears the N6-acetyllysine mark. Residues glutamate 71, glycine 144, threonine 145, threonine 179, asparagine 206, and asparagine 228 each contribute to the GTP site. A Mg(2+)-binding site is contributed by glutamate 71. The active site involves glutamate 254.

This sequence belongs to the tubulin family. Dimer of alpha and beta chains. A typical microtubule is a hollow water-filled tube with an outer diameter of 25 nm and an inner diameter of 15 nM. Alpha-beta heterodimers associate head-to-tail to form protofilaments running lengthwise along the microtubule wall with the beta-tubulin subunit facing the microtubule plus end conferring a structural polarity. Microtubules usually have 13 protofilaments but different protofilament numbers can be found in some organisms and specialized cells. The cofactor is Mg(2+). In terms of processing, undergoes a tyrosination/detyrosination cycle, the cyclic removal and re-addition of a C-terminal tyrosine residue by the enzymes tubulin tyrosine carboxypeptidase (TTCP) and tubulin tyrosine ligase (TTL), respectively.

The protein localises to the cytoplasm. The protein resides in the cytoskeleton. It catalyses the reaction GTP + H2O = GDP + phosphate + H(+). Tubulin is the major constituent of microtubules, a cylinder consisting of laterally associated linear protofilaments composed of alpha- and beta-tubulin heterodimers. Microtubules grow by the addition of GTP-tubulin dimers to the microtubule end, where a stabilizing cap forms. Below the cap, tubulin dimers are in GDP-bound state, owing to GTPase activity of alpha-tubulin. The polypeptide is Tubulin alpha-2 chain (TUBA2) (Chlamydomonas reinhardtii (Chlamydomonas smithii)).